The following is a 656-amino-acid chain: Replication protein A 70 kDa DNA-binding subunit A (656 aa).

Positions Ala-225–Leu-307 form a DNA-binding region, OB. Residues Cys-516–Cys-542 form a C4-type zinc finger.

Belongs to the replication factor A protein 1 family. Heterotrimer of RPA1, RPA2 and RPA3 (canonical replication protein A complex). Interacts with RPA2B. Expressed in root tips, roots, shoot apical meristem (SAM), young leaves, flag leaves and ears, and at lower levels in mature leaves.

It is found in the nucleus. Functionally, component of the replication protein A complex (RPA) required for DNA recombination, repair and replication. The activity of RPA is mediated by single-stranded DNA binding and protein interactions. Plays an essential role in meiotic and somatic DNA repair, but is dispensable for DNA replication and homologous recombination. Is essential for normal progression through meiosis in pollen mother cells. Is involved in repair of double-strand DNA breaks (DSBs) induced by genotoxic stresses. This is Replication protein A 70 kDa DNA-binding subunit A (RPA1A) from Oryza sativa subsp. japonica (Rice).